The following is a 143-amino-acid chain: Nucleoside diphosphate kinase (143 aa).

The ATP site is built by Lys-10, Phe-58, Arg-86, Thr-92, Arg-103, and Asn-113. The active-site Pros-phosphohistidine intermediate is the His-116.

The protein belongs to the NDK family. Homotetramer. It depends on Mg(2+) as a cofactor.

Its subcellular location is the cytoplasm. It carries out the reaction a 2'-deoxyribonucleoside 5'-diphosphate + ATP = a 2'-deoxyribonucleoside 5'-triphosphate + ADP. It catalyses the reaction a ribonucleoside 5'-diphosphate + ATP = a ribonucleoside 5'-triphosphate + ADP. In terms of biological role, major role in the synthesis of nucleoside triphosphates other than ATP. The ATP gamma phosphate is transferred to the NDP beta phosphate via a ping-pong mechanism, using a phosphorylated active-site intermediate. This is Nucleoside diphosphate kinase from Ehrlichia ruminantium (strain Welgevonden).